We begin with the raw amino-acid sequence, 266 residues long: Orcokinin peptides type B (266 aa).

An N-terminal signal peptide occupies residues 1–20 (MTAQMFTIALLLSLSAIAAA). Propeptides lie at residues 21-46 (GTIK…GAPV), 240-246 (DYDVFPD), and 264-266 (NVE).

The protein belongs to the orcokinin family.

It localises to the secreted. Functionally, myotropic peptides that enhance both the frequency and amplitude of spontaneous hindgut contractions. This is Orcokinin peptides type B from Procambarus clarkii (Red swamp crayfish).